The primary structure comprises 1409 residues: MAP kinase-activating death domain protein (1409 aa).

One can recognise a uDENN domain in the interval 26–230 (RGASQSSPDA…VPVPGKTKVQ (205 aa)). Residues 251–390 (RFTLIDFPLH…DATHLKERLK (140 aa)) form the cDENN domain. One can recognise a dDENN domain in the interval 392–496 (AINKMTTMTV…ECCLCPKNET (105 aa)). Disordered regions lie at residues 654–701 (SFDH…MKGL), 761–784 (QHIV…QSKN), 902–1008 (SSSA…KVKT), and 1015–1034 (PQNL…SFLA). Polar residues-rich tracts occupy residues 680–691 (SDASDTPTSRGS) and 761–772 (QHIVRSKTQPNP). 2 stretches are compositionally biased toward low complexity: residues 773–784 (TSQQTANQQSKN) and 902–913 (SSSAPSTMTTPS). Residues 915–925 (HSNDILKESRP) show a composition bias toward basic and acidic residues. Residues 941 to 961 (LGQNVTPTSTNNHEIAQSTRS) are compositionally biased toward polar residues. Pro residues predominate over residues 963–1003 (ALPPPVPPREAPPIPKRNPPPLGAPPKVPEGARAPPPLPPR). Positions 1020 to 1031 (PNNQPAQPSSPS) are enriched in low complexity. Residues 1109–1184 (GMDQEPSEMI…GLVCSKEINK (76 aa)) enclose the Death domain.

It belongs to the MADD family. In terms of assembly, interacts with cab-1. As to expression, expressed in nearly all neurons.

The protein localises to the cell membrane. It is found in the cytoplasm. Guanyl-nucleotide exchange factor that regulates small GTPases. Converts GDP-bound inactive form of rab-3 and cab-1 to the GTP-bound active forms. Regulator of presynaptic activity that interacts with rab-3 to regulate synaptic vesicle release. Is also a regulator of the cab-1 synaptic transmission pathway. Probably by converting rab-3 to its GTP-bound active form, plays a role in the recruitment of endophilin unc-57 to synaptic vesicles. Probably by activating rab-3 and thus regulating the trafficking of dense-core vesicles, plays a role in AVG neuron-mediated formation of the right axon tract of the ventral nerve cord. Regulates anterior body muscle contractions (aBOC) and the expulsion steps during the defecation motor program (DMP). Probably by regulating DMP, required for fatty acid uptake by intestinal cells. In Caenorhabditis elegans, this protein is MAP kinase-activating death domain protein (aex-3).